The sequence spans 224 residues: Thymidylate kinase (224 aa).

Residue 7-14 (GIEGSGKS) coordinates ATP.

Belongs to the thymidylate kinase family.

It catalyses the reaction dTMP + ATP = dTDP + ADP. Phosphorylation of dTMP to form dTDP in both de novo and salvage pathways of dTTP synthesis. This chain is Thymidylate kinase, found in Nitratidesulfovibrio vulgaris (strain DP4) (Desulfovibrio vulgaris).